Consider the following 292-residue polypeptide: Homoserine kinase (292 aa).

Residue 81-91 (RPKSGLGSSGA) coordinates ATP.

It belongs to the GHMP kinase family. Homoserine kinase subfamily.

The protein resides in the cytoplasm. The catalysed reaction is L-homoserine + ATP = O-phospho-L-homoserine + ADP + H(+). The protein operates within amino-acid biosynthesis; L-threonine biosynthesis; L-threonine from L-aspartate: step 4/5. Its function is as follows. Catalyzes the ATP-dependent phosphorylation of L-homoserine to L-homoserine phosphate. The sequence is that of Homoserine kinase from Pyrococcus furiosus (strain ATCC 43587 / DSM 3638 / JCM 8422 / Vc1).